An 89-amino-acid polypeptide reads, in one-letter code: Small ribosomal subunit protein uS15 (89 aa).

The segment at 1–22 is disordered; that stretch reads MALEKEEKSQIINNYQLHETDT. Polar residues predominate over residues 10-22; the sequence is QIINNYQLHETDT.

This sequence belongs to the universal ribosomal protein uS15 family. Part of the 30S ribosomal subunit. Forms a bridge to the 50S subunit in the 70S ribosome, contacting the 23S rRNA.

Functionally, one of the primary rRNA binding proteins, it binds directly to 16S rRNA where it helps nucleate assembly of the platform of the 30S subunit by binding and bridging several RNA helices of the 16S rRNA. Its function is as follows. Forms an intersubunit bridge (bridge B4) with the 23S rRNA of the 50S subunit in the ribosome. This is Small ribosomal subunit protein uS15 from Chloroflexus aggregans (strain MD-66 / DSM 9485).